The following is a 95-amino-acid chain: Aspartyl/glutamyl-tRNA(Asn/Gln) amidotransferase subunit C (95 aa).

It belongs to the GatC family. Heterotrimer of A, B and C subunits.

The enzyme catalyses L-glutamyl-tRNA(Gln) + L-glutamine + ATP + H2O = L-glutaminyl-tRNA(Gln) + L-glutamate + ADP + phosphate + H(+). It carries out the reaction L-aspartyl-tRNA(Asn) + L-glutamine + ATP + H2O = L-asparaginyl-tRNA(Asn) + L-glutamate + ADP + phosphate + 2 H(+). Functionally, allows the formation of correctly charged Asn-tRNA(Asn) or Gln-tRNA(Gln) through the transamidation of misacylated Asp-tRNA(Asn) or Glu-tRNA(Gln) in organisms which lack either or both of asparaginyl-tRNA or glutaminyl-tRNA synthetases. The reaction takes place in the presence of glutamine and ATP through an activated phospho-Asp-tRNA(Asn) or phospho-Glu-tRNA(Gln). The polypeptide is Aspartyl/glutamyl-tRNA(Asn/Gln) amidotransferase subunit C (Dehalococcoides mccartyi (strain ATCC BAA-2100 / JCM 16839 / KCTC 5957 / BAV1)).